Reading from the N-terminus, the 292-residue chain is Large ribosomal subunit protein bL19m (292 aa).

Residues 41 to 60 are disordered; that stretch reads SRFQSTGPSEPGGFKPPPKP. A Phosphoserine modification is found at S77.

It belongs to the bacterial ribosomal protein bL19 family. Component of the mitochondrial ribosome large subunit (39S) which comprises a 16S rRNA and about 50 distinct proteins.

It localises to the mitochondrion. In Mus musculus (Mouse), this protein is Large ribosomal subunit protein bL19m (Mrpl19).